The sequence spans 674 residues: Enzymatic polyprotein (674 aa).

The protease stretch occupies residues Ile-40–Phe-130. The active site involves Asp-47. One can recognise a Reverse transcriptase domain in the interval Leu-267–Ile-447.

This sequence belongs to the caulimoviridae enzymatic polyprotein family.

The catalysed reaction is DNA(n) + a 2'-deoxyribonucleoside 5'-triphosphate = DNA(n+1) + diphosphate. Its function is as follows. Encodes for at least two polypeptides: protease (PR) and reverse transcriptase (RT). The protease processes the polyprotein in cis. Reverse transcriptase is multifunctional enzyme that converts the viral RNA genome into dsDNA in viral cytoplasmic capsids. This enzyme displays a DNA polymerase activity that can copy either DNA or RNA templates, and a ribonuclease H (RNase H) activity that cleaves the RNA strand of RNA-DNA heteroduplexes in a partially processive 3'- to 5'-endonucleasic mode. Neo-synthesized pregenomic RNA (pgRNA) are encapsidated, and reverse-transcribed inside the nucleocapsid. Partial (+)DNA is synthesized from the (-)DNA template and generates the relaxed circular DNA (RC-DNA) genome. After budding and infection, the RC-DNA migrates in the nucleus, and is converted into a plasmid-like covalently closed circular DNA (cccDNA). In Arabidopsis thaliana (Mouse-ear cress), this protein is Enzymatic polyprotein.